Reading from the N-terminus, the 124-residue chain is MTSIHTGSNNNIVELDMSELIRPIPPVLDMNKVNSMMETMTGKTPPASCGLTSEDLEAGELPPVDVLTFKKSGKPYYFAFGGCHRLRAHDEAGRKKVRCKLVNCSPNTLRLYLGASANKFLDSD.

It belongs to the sulfiredoxin family. As to quaternary structure, interacts with tpx1 in response to oxidative stress.

It is found in the cytoplasm. It localises to the nucleus. The catalysed reaction is S-hydroxy-S-oxy-L-cysteinyl-[peroxiredoxin] + [protein]-dithiol + ATP = S-hydroxy-L-cysteinyl-[peroxiredoxin] + [protein]-disulfide + ADP + phosphate. Functionally, contributes to oxidative stress resistance by reducing cysteine-sulfinic acid formed under exposure to oxidants in a peroxiredoxin. May catalyze the reduction in a multi-step process by acting both as a specific phosphotransferase and a thioltransferase. This Schizosaccharomyces pombe (strain 972 / ATCC 24843) (Fission yeast) protein is Sulfiredoxin (srx1).